A 226-amino-acid chain; its full sequence is Chalcone--flavanone isomerase (226 aa).

Substrate-binding residues include Thr51, Asn116, and Ser194.

It belongs to the chalcone isomerase family.

The catalysed reaction is a chalcone = a flavanone.. It participates in secondary metabolite biosynthesis; flavonoid biosynthesis. In terms of biological role, catalyzes the intramolecular cyclization of bicyclic chalcones into tricyclic (S)-flavanones. Responsible for the isomerization of 4,2',4',6'-tetrahydroxychalcone (also termed chalcone) into naringenin. The chain is Chalcone--flavanone isomerase (CHI) from Canna generalis (Canna lily).